The sequence spans 663 residues: Syntabulin (663 aa).

Disordered stretches follow at residues 1–202 (MGPL…PREK) and 216–267 (VNIH…PEQY). The segment at 2–417 (GPLRESKKEH…DTMADGLSLE (416 aa)) is sufficient for interaction with KIF5B. Serine 50 is subject to Phosphoserine. Over residues 57-73 (FNPSSSGRSARTVSSNS) the composition is skewed to low complexity. Over residues 81–97 (CPSSQSVSPVKTPSDAG) the composition is skewed to polar residues. At serine 107 the chain carries Phosphoserine. Low complexity-rich tracts occupy residues 145–158 (EADFSSSSSTGSIS), 188–198 (SSHKPGSSPSS), and 221–241 (SYAPSSPSSSNSGSYKGSDCS). Positions 271-353 (LQQKEVTVRH…MRSSLADKDK (83 aa)) form a coiled coil. Residues 310 to 417 (REDWIEEECH…DTMADGLSLE (108 aa)) are sufficient for interaction with STX1A. Phosphoserine is present on residues serine 396 and serine 555. The chain crosses the membrane as a helical span at residues 606–626 (SFLVDLLAVAAPVVPTVLWAF).

Interacts with STX1A and KIF5B. Isoform 3, isoform 4 and isoform 5 are expressed in HeLa cell line (at protein level). Isoform 3 is expressed in fetal and adult brain. Isoform 4 is expressed in numerous fetal tissues (brain, kidney, liver, lung, and thymus) and in adult brain, kidney, liver, lung, pancreas, colon, prostate, small intestine, testis and thymus. Isoform 5 is expressed in fetal brain, brain and small intestine.

It localises to the cytoplasm. Its subcellular location is the cytoskeleton. The protein resides in the cytoplasmic vesicle. The protein localises to the golgi apparatus membrane. In terms of biological role, part of a kinesin motor-adapter complex that is critical for the anterograde axonal transport of active zone components and contributes to activity-dependent presynaptic assembly during neuronal development. The protein is Syntabulin (SYBU) of Homo sapiens (Human).